Here is a 327-residue protein sequence, read N- to C-terminus: DNA-directed RNA polymerase subunit alpha (327 aa).

Positions 1 to 233 (MVREKVKVST…NLFIPFLHVE (233 aa)) are alpha N-terminal domain (alpha-NTD). The segment at 264–327 (TKELAFQYIF…KKILDILEKK (64 aa)) is alpha C-terminal domain (alpha-CTD).

The protein belongs to the RNA polymerase alpha chain family. In plastids the minimal PEP RNA polymerase catalytic core is composed of four subunits: alpha, beta, beta', and beta''. When a (nuclear-encoded) sigma factor is associated with the core the holoenzyme is formed, which can initiate transcription.

It is found in the plastid. The protein resides in the chloroplast. It carries out the reaction RNA(n) + a ribonucleoside 5'-triphosphate = RNA(n+1) + diphosphate. Functionally, DNA-dependent RNA polymerase catalyzes the transcription of DNA into RNA using the four ribonucleoside triphosphates as substrates. This chain is DNA-directed RNA polymerase subunit alpha, found in Capsella bursa-pastoris (Shepherd's purse).